We begin with the raw amino-acid sequence, 104 residues long: Large ribosomal subunit protein uL24 (104 aa).

It belongs to the universal ribosomal protein uL24 family. As to quaternary structure, part of the 50S ribosomal subunit.

Its function is as follows. One of two assembly initiator proteins, it binds directly to the 5'-end of the 23S rRNA, where it nucleates assembly of the 50S subunit. In terms of biological role, one of the proteins that surrounds the polypeptide exit tunnel on the outside of the subunit. This is Large ribosomal subunit protein uL24 from Halothermothrix orenii (strain H 168 / OCM 544 / DSM 9562).